The chain runs to 158 residues: Transcription elongation factor GreA (158 aa).

Residues 47-74 are a coiled coil; sequence AEYHAAKEEQSHNEGRIAELEDKLARAD.

Belongs to the GreA/GreB family.

Necessary for efficient RNA polymerase transcription elongation past template-encoded arresting sites. The arresting sites in DNA have the property of trapping a certain fraction of elongating RNA polymerases that pass through, resulting in locked ternary complexes. Cleavage of the nascent transcript by cleavage factors such as GreA or GreB allows the resumption of elongation from the new 3'terminus. GreA releases sequences of 2 to 3 nucleotides. This Bradyrhizobium sp. (strain BTAi1 / ATCC BAA-1182) protein is Transcription elongation factor GreA.